The sequence spans 1040 residues: Kinesin-like protein KIN-14H (1040 aa).

One can recognise a Calponin-homology (CH) domain in the interval 54 to 176 (DLRRYEAARW…CVLALKSYRE (123 aa)). A disordered region spans residues 208 to 242 (SEVPVDAVTNSPSSTPSSEQPLLDQSDSNTKNDGT). Over residues 215–242 (VTNSPSSTPSSEQPLLDQSDSNTKNDGT) the composition is skewed to polar residues. The Kinesin motor domain occupies 434–754 (SIRVYCRVRP…LKFAERVATV (321 aa)). 517–524 (GQTGSGKT) provides a ligand contact to ATP. Positions 761 to 796 (VNKDTSEVKELKEQIASLKLALARKESGADQTQLQR) form a coiled coil. The span at 809–818 (LGVSSSFSKS) shows a compositional bias: low complexity. Disordered stretches follow at residues 809–871 (LGVS…GKEE), 887–926 (EDEITRSSKPENRAHTQLEKRTSSLKREATRGVDKNKCNS), and 969–1040 (MPRP…QNPK). Over residues 840–851 (IEGQSDSASSLD) the composition is skewed to polar residues. Positions 887–923 (EDEITRSSKPENRAHTQLEKRTSSLKREATRGVDKNK) are enriched in basic and acidic residues. Over residues 1018–1031 (SPGQTSSRHNNSTV) the composition is skewed to polar residues.

The protein belongs to the TRAFAC class myosin-kinesin ATPase superfamily. Kinesin family. KIN-14 subfamily.

The protein is Kinesin-like protein KIN-14H of Arabidopsis thaliana (Mouse-ear cress).